The primary structure comprises 521 residues: Cytochrome P450 monooxygenase ABA2 (521 aa).

A helical transmembrane segment spans residues 15–35 (AGHLGMAVTFTILVAFTIHVL). N-linked (GlcNAc...) asparagine glycosylation is present at N366. Residue C458 coordinates heme.

The protein belongs to the cytochrome P450 family. Heme is required as a cofactor.

The protein localises to the membrane. Its pathway is hormone biosynthesis. Functionally, cytochrome P450 monooxygenase involved in the biosynthesis of abscisic acid (ABA), a phytohormone that acts antagonistically toward salicylic acid (SA), jasmonic acid (JA) and ethylene (ETH) signaling, to impede plant defense responses. During pathogen-host interaction, ABA plays a dual role in disease severity by increasing plant susceptibility and accelerating pathogenesis in the fungus itself. The first step of the pathway catalyzes the reaction from farnesyl diphosphate to alpha-ionylideneethane performed by the alpha-ionylideneethane synthase ABA3 via a three-step reaction mechanism involving 2 neutral intermediates, beta-farnesene and allofarnesene. The cytochrome P450 monooxygenase ABA1 might then be involved in the conversion of alpha-ionylideneethane to alpha-ionylideneacetic acid. Alpha-ionylideneacetic acid is further converted to abscisic acid in 2 steps involving the cytochrome P450 monooxygenase ABA2 and the short-chain dehydrogenase/reductase ABA4, via the intermediates 1'-deoxy-ABA or 1',4'-trans-diol-ABA, depending on the order of action of these 2 enzymes. ABA2 is responsible for the hydroxylation of carbon atom C-1' and ABA4 might be involved in the oxidation of the C-4' carbon atom. This is Cytochrome P450 monooxygenase ABA2 from Pyricularia oryzae (strain 70-15 / ATCC MYA-4617 / FGSC 8958) (Rice blast fungus).